Reading from the N-terminus, the 235-residue chain is Large ribosomal subunit protein uL3 (235 aa).

A disordered region spans residues 150–189 (AGGPASHGSGHHRHAGSTGMRSTPGRGLPGGKKAGQMGNE).

This sequence belongs to the universal ribosomal protein uL3 family. Part of the 50S ribosomal subunit. Forms a cluster with proteins L14 and L19.

Its function is as follows. One of the primary rRNA binding proteins, it binds directly near the 3'-end of the 23S rRNA, where it nucleates assembly of the 50S subunit. The polypeptide is Large ribosomal subunit protein uL3 (Protochlamydia amoebophila (strain UWE25)).